Reading from the N-terminus, the 368-residue chain is Endophilin-A2 (368 aa).

The tract at residues 1 to 21 (MSVAGLKKQFYKASQLVSEKV) is membrane-binding amphipathic helix. Residues 18-249 (SEKVGGAEGT…LKRRMREASS (232 aa)) enclose the BAR domain. The interval 60 to 87 (PNPASRAKLTMLNTVSKIRGQVKNPGYP) is required for dimerization upon membrane association. Positions 181-250 (EELRQAMEKF…KRRMREASSR (70 aa)) form a coiled coil. Residues 218–254 (LVDAQLDYHRQAVQILDELADKLKRRMREASSRPKRE) form an interaction with ARC region. The segment at 243–308 (RMREASSRPK…PSRSMPPLDQ (66 aa)) is disordered. Positions 245 to 263 (REASSRPKREYKPKPRELL) are enriched in basic and acidic residues. Phosphoserine occurs at positions 288 and 292. T298 carries the phosphothreonine modification. An SH3 domain is found at 306–365 (LDQPSCKALYDFEPENDGELGFHEGDIITLTNQIDENWYEGMLDGQSGFFPLSYVEVLVP). Y315 is modified (phosphotyrosine).

Belongs to the endophilin family. As to quaternary structure, interacts with ARC, SYNJ1 and DNM1. Interacts with PDCD6IP. Interacts with BIN2.

The protein resides in the cytoplasm. The protein localises to the early endosome membrane. It localises to the cell projection. Its subcellular location is the podosome. Functionally, implicated in endocytosis. May recruit other proteins to membranes with high curvature. The sequence is that of Endophilin-A2 from Bos taurus (Bovine).